A 333-amino-acid polypeptide reads, in one-letter code: UDP-3-O-acylglucosamine N-acyltransferase (333 aa).

His225 (proton acceptor) is an active-site residue.

This sequence belongs to the transferase hexapeptide repeat family. LpxD subfamily. As to quaternary structure, homotrimer.

It catalyses the reaction a UDP-3-O-[(3R)-3-hydroxyacyl]-alpha-D-glucosamine + a (3R)-hydroxyacyl-[ACP] = a UDP-2-N,3-O-bis[(3R)-3-hydroxyacyl]-alpha-D-glucosamine + holo-[ACP] + H(+). Its pathway is bacterial outer membrane biogenesis; LPS lipid A biosynthesis. In terms of biological role, catalyzes the N-acylation of UDP-3-O-acylglucosamine using 3-hydroxyacyl-ACP as the acyl donor. Is involved in the biosynthesis of lipid A, a phosphorylated glycolipid that anchors the lipopolysaccharide to the outer membrane of the cell. This is UDP-3-O-acylglucosamine N-acyltransferase from Paracidovorax citrulli (strain AAC00-1) (Acidovorax citrulli).